Here is a 175-residue protein sequence, read N- to C-terminus: Co-chaperone protein HscB homolog (175 aa).

The J domain occupies 7 to 79; the sequence is SHFDLFDLPA…LKRATYLLHL (73 aa).

The protein belongs to the HscB family. As to quaternary structure, interacts with HscA and stimulates its ATPase activity.

Functionally, co-chaperone involved in the maturation of iron-sulfur cluster-containing proteins. Seems to help targeting proteins to be folded toward HscA. The sequence is that of Co-chaperone protein HscB homolog from Paraburkholderia xenovorans (strain LB400).